Here is a 783-residue protein sequence, read N- to C-terminus: Polyribonucleotide nucleotidyltransferase 1, mitochondrial (783 aa).

The transit peptide at 1–46 (MAACRYCCSCLRLRPLSDGPFCLPGRDRALTQLLVRALWSSTGSRA) directs the protein to the mitochondrion. An N6-acetyllysine mark is found at Lys250, Lys264, Lys285, and Lys289. N6-succinyllysine is present on Lys552. Residues 605–664 (PVVETVQVPLSKRAKFVGPGGYNLKKLQAETGVTISQVDEETFSVFAPTPSALHEARDFI) enclose the KH domain. An S1 motif domain is found at 679–750 (GAVYTATITE…ADGRMRLSRK (72 aa)). 2 positions are modified to phosphoserine: Ser754 and Ser782.

This sequence belongs to the polyribonucleotide nucleotidyltransferase family. As to quaternary structure, homotrimer; in free form. Homooligomer. Component of the mitochondrial degradosome (mtEXO) complex which is a heteropentamer containing 2 copies of SUPV3L1 and 3 copies of PNPT1. As part of the mitochondrial degradosome complex, interacts with GRSF1 in an RNA-dependent manner; the interaction enhances the activity of the complex. Interacts with TCL1A; the interaction has no effect on PNPT1 exonuclease activity.

It localises to the cytoplasm. The protein localises to the mitochondrion matrix. The protein resides in the mitochondrion intermembrane space. The catalysed reaction is RNA(n+1) + phosphate = RNA(n) + a ribonucleoside 5'-diphosphate. Its function is as follows. RNA-binding protein implicated in numerous RNA metabolic processes. Catalyzes the phosphorolysis of single-stranded polyribonucleotides processively in the 3'-to-5' direction. Mitochondrial intermembrane factor with RNA-processing exoribonulease activity. Component of the mitochondrial degradosome (mtEXO) complex, that degrades 3' overhang double-stranded RNA with a 3'-to-5' directionality in an ATP-dependent manner. Involved in the degradation of non-coding mitochondrial transcripts (MT-ncRNA) and tRNA-like molecules. Required for correct processing and polyadenylation of mitochondrial mRNAs. Plays a role as a cytoplasmic RNA import factor that mediates the translocation of small RNA components like the 5S RNA, the RNA subunit of ribonuclease P and the mitochondrial RNA-processing (MRP) RNA, into the mitochondrial matrix. Plays a role in mitochondrial morphogenesis and respiration; regulates the expression of the electron transport chain (ETC) components at the mRNA and protein levels. In the cytoplasm, shows a 3'-to-5' exoribonuclease mediating mRNA degradation activity; degrades c-myc mRNA upon treatment with IFNB1/IFN-beta, resulting in a growth arrest in melanoma cells. Regulates the stability of specific mature miRNAs in melanoma cells; specifically and selectively degrades miR-221, preferentially. Also plays a role in RNA cell surveillance by cleaning up oxidized RNAs. Binds to the RNA subunit of ribonuclease P, MRP RNA and miR-221 microRNA. The chain is Polyribonucleotide nucleotidyltransferase 1, mitochondrial (PNPT1) from Pongo abelii (Sumatran orangutan).